Here is a 278-residue protein sequence, read N- to C-terminus: 4-hydroxy-3-methylbut-2-enyl diphosphate reductase (278 aa).

[4Fe-4S] cluster is bound at residue Cys-12. Positions 41 and 74 each coordinate (2E)-4-hydroxy-3-methylbut-2-enyl diphosphate. Dimethylallyl diphosphate-binding residues include His-41 and His-74. 2 residues coordinate isopentenyl diphosphate: His-41 and His-74. Cys-96 contacts [4Fe-4S] cluster. A (2E)-4-hydroxy-3-methylbut-2-enyl diphosphate-binding site is contributed by His-124. His-124 lines the dimethylallyl diphosphate pocket. An isopentenyl diphosphate-binding site is contributed by His-124. Catalysis depends on Glu-126, which acts as the Proton donor. Position 161 (Thr-161) interacts with (2E)-4-hydroxy-3-methylbut-2-enyl diphosphate. Cys-189 contacts [4Fe-4S] cluster. Residues Ser-217, Asn-219, and Ser-261 each contribute to the (2E)-4-hydroxy-3-methylbut-2-enyl diphosphate site. Ser-217, Asn-219, and Ser-261 together coordinate dimethylallyl diphosphate. Isopentenyl diphosphate contacts are provided by Ser-217, Asn-219, and Ser-261.

Belongs to the IspH family. It depends on [4Fe-4S] cluster as a cofactor.

The catalysed reaction is isopentenyl diphosphate + 2 oxidized [2Fe-2S]-[ferredoxin] + H2O = (2E)-4-hydroxy-3-methylbut-2-enyl diphosphate + 2 reduced [2Fe-2S]-[ferredoxin] + 2 H(+). It carries out the reaction dimethylallyl diphosphate + 2 oxidized [2Fe-2S]-[ferredoxin] + H2O = (2E)-4-hydroxy-3-methylbut-2-enyl diphosphate + 2 reduced [2Fe-2S]-[ferredoxin] + 2 H(+). The protein operates within isoprenoid biosynthesis; dimethylallyl diphosphate biosynthesis; dimethylallyl diphosphate from (2E)-4-hydroxy-3-methylbutenyl diphosphate: step 1/1. It participates in isoprenoid biosynthesis; isopentenyl diphosphate biosynthesis via DXP pathway; isopentenyl diphosphate from 1-deoxy-D-xylulose 5-phosphate: step 6/6. In terms of biological role, catalyzes the conversion of 1-hydroxy-2-methyl-2-(E)-butenyl 4-diphosphate (HMBPP) into a mixture of isopentenyl diphosphate (IPP) and dimethylallyl diphosphate (DMAPP). Acts in the terminal step of the DOXP/MEP pathway for isoprenoid precursor biosynthesis. This is 4-hydroxy-3-methylbut-2-enyl diphosphate reductase from Anaeromyxobacter sp. (strain K).